A 94-amino-acid chain; its full sequence is MLLDLSKIFGKSKNSKDLAKERLKLVLIHDRANVSPQFLEMVKGEIIKVISNYMDVDEESLDIQMTRTKSEDGNSVVPALVANIPIRSVKNSGK.

The protein belongs to the MinE family.

Prevents the cell division inhibition by proteins MinC and MinD at internal division sites while permitting inhibition at polar sites. This ensures cell division at the proper site by restricting the formation of a division septum at the midpoint of the long axis of the cell. This Acetivibrio thermocellus (strain ATCC 27405 / DSM 1237 / JCM 9322 / NBRC 103400 / NCIMB 10682 / NRRL B-4536 / VPI 7372) (Clostridium thermocellum) protein is Cell division topological specificity factor.